Reading from the N-terminus, the 156-residue chain is Small ribosomal subunit protein uS7 (156 aa).

The protein belongs to the universal ribosomal protein uS7 family. In terms of assembly, part of the 30S ribosomal subunit. Contacts proteins S9 and S11.

Its function is as follows. One of the primary rRNA binding proteins, it binds directly to 16S rRNA where it nucleates assembly of the head domain of the 30S subunit. Is located at the subunit interface close to the decoding center, probably blocks exit of the E-site tRNA. This chain is Small ribosomal subunit protein uS7, found in Cupriavidus metallidurans (strain ATCC 43123 / DSM 2839 / NBRC 102507 / CH34) (Ralstonia metallidurans).